The primary structure comprises 357 residues: 3-dehydroquinate synthase (357 aa).

NAD(+)-binding positions include 104–108, 128–129, K141, and 168–171; these read GVVGD, TT, and FLET. E183, H243, and H260 together coordinate Zn(2+).

It belongs to the sugar phosphate cyclases superfamily. Dehydroquinate synthase family. It depends on NAD(+) as a cofactor. Co(2+) serves as cofactor. Zn(2+) is required as a cofactor.

The protein resides in the cytoplasm. The enzyme catalyses 7-phospho-2-dehydro-3-deoxy-D-arabino-heptonate = 3-dehydroquinate + phosphate. It functions in the pathway metabolic intermediate biosynthesis; chorismate biosynthesis; chorismate from D-erythrose 4-phosphate and phosphoenolpyruvate: step 2/7. Functionally, catalyzes the conversion of 3-deoxy-D-arabino-heptulosonate 7-phosphate (DAHP) to dehydroquinate (DHQ). The polypeptide is 3-dehydroquinate synthase (Streptococcus pyogenes serotype M18 (strain MGAS8232)).